Here is a 651-residue protein sequence, read N- to C-terminus: Far upstream element-binding protein 1 (651 aa).

Disordered stretches follow at residues 1 to 24 and 40 to 92; these read MADY…GVVN and KIGG…HQQQ. Alanine 2 bears the N-acetylalanine mark. Phosphoserine occurs at positions 48 and 51. The segment covering 61-73 has biased composition (basic and acidic residues); it reads RPLEDGDQPDAKK. KH domains follow at residues 96–160, 181–247, and 271–335; these read VMTE…KRLL, NAVQ…KEMV, and NEGI…AEII. Serine 136 bears the Phosphoserine mark. Residue threonine 149 is modified to Phosphothreonine. Omega-N-methylarginine occurs at positions 317, 355, 357, and 359. Residues 372–439 enclose the KH 4 domain; it reads LQEFNFIVPT…QQIDYARQLI (68 aa). Phosphoserine is present on serine 411. The residue at position 428 (threonine 428) is a Phosphothreonine. 3 disordered regions span residues 443-528, 545-574, and 625-651; these read IGGP…GADP, AQPP…APAG, and TSPQ…HHLY. Pro residues predominate over residues 464–501; the sequence is PHGPPGPPGPGTPMGPYNPAPYNPGPPGPAPHGPPAPY. Composition is skewed to low complexity over residues 514–528 and 552–574; these read QQQA…GADP and PAGA…APAG. At serine 626 the chain carries Phosphoserine.

Found in a complex with PUF60 and far upstream element (FUSE) DNA segment. Interacts with PUF60 and JTV1. Post-translationally, ubiquitinated. This targets the protein for proteasome-mediated degradation.

It localises to the nucleus. Regulates MYC expression by binding to a single-stranded far-upstream element (FUSE) upstream of the MYC promoter. May act both as activator and repressor of transcription. In Mus musculus (Mouse), this protein is Far upstream element-binding protein 1 (Fubp1).